A 159-amino-acid polypeptide reads, in one-letter code: Adult-specific rigid cuticular protein 15.7 (159 aa).

The region spanning 23-89 (LGNYAFNYGI…SIKTNEPGTA (67 aa)) is the Chitin-binding type R&amp;R domain.

Its function is as follows. Component of the rigid cuticle of the spider. The chain is Adult-specific rigid cuticular protein 15.7 from Araneus diadematus (European garden spider).